The sequence spans 430 residues: Enolase (430 aa).

(2R)-2-phosphoglycerate is bound at residue Q164. E206 (proton donor) is an active-site residue. Positions 243, 286, and 313 each coordinate Mg(2+). The (2R)-2-phosphoglycerate site is built by K338, R367, S368, and K389. K338 serves as the catalytic Proton acceptor.

This sequence belongs to the enolase family. As to quaternary structure, component of the RNA degradosome, a multiprotein complex involved in RNA processing and mRNA degradation. It depends on Mg(2+) as a cofactor.

The protein localises to the cytoplasm. Its subcellular location is the secreted. It is found in the cell surface. The enzyme catalyses (2R)-2-phosphoglycerate = phosphoenolpyruvate + H2O. The protein operates within carbohydrate degradation; glycolysis; pyruvate from D-glyceraldehyde 3-phosphate: step 4/5. Catalyzes the reversible conversion of 2-phosphoglycerate (2-PG) into phosphoenolpyruvate (PEP). It is essential for the degradation of carbohydrates via glycolysis. This chain is Enolase, found in Dichelobacter nodosus (strain VCS1703A).